The primary structure comprises 316 residues: Tetrahydromethanopterin S-methyltransferase subunit H (316 aa).

The protein belongs to the MtrH family. The complex is composed of 8 subunits; MtrA, MtrB, MtrC, MtrD, MtrE, MtrF, MtrG and MtrH.

The catalysed reaction is 5-methyl-5,6,7,8-tetrahydromethanopterin + coenzyme M + 2 Na(+)(in) = 5,6,7,8-tetrahydromethanopterin + methyl-coenzyme M + 2 Na(+)(out). It participates in one-carbon metabolism; methanogenesis from CO(2); methyl-coenzyme M from 5,10-methylene-5,6,7,8-tetrahydromethanopterin: step 2/2. Its function is as follows. Part of a complex that catalyzes the formation of methyl-coenzyme M and tetrahydromethanopterin from coenzyme M and methyl-tetrahydromethanopterin. This is an energy-conserving, sodium-ion translocating step. MtrH catalyzes the transfer of the methyl group from methyl-tetrahydromethanopterin to the corrinoid prosthetic group of MtrA. This Methanosarcina barkeri (strain Fusaro / DSM 804) protein is Tetrahydromethanopterin S-methyltransferase subunit H.